The chain runs to 1047 residues: Ubiquitin carboxyl-terminal hydrolase 28 (1047 aa).

Disordered regions lie at residues 60-95 and 110-138; these read DQEP…DPEK and SPKA…RCEV. Residues 94–113 form the UIM domain; that stretch reads EKKGDVHSAVAYGQLESPKA. Residues 111–128 are compositionally biased toward basic and acidic residues; the sequence is PKAHAAERPQEVHSPEHK. Positions 156-651 constitute a USP domain; it reads VGMKNIGNTC…SAYCLMYISD (496 aa). Cysteine 165 functions as the Nucleophile in the catalytic mechanism. Polar residues predominate over residues 461 to 486; the sequence is STEDSQMMDRQSQGESLILGTPSQPD. Positions 461-528 are disordered; that stretch reads STEDSQMMDR…SEPPAEMSDC (68 aa). The segment covering 489–498 has biased composition (basic and acidic residues); that stretch reads LDGKDGKPED. Residues 504-516 are compositionally biased toward polar residues; the sequence is ANSSPQQQLNAPL. Histidine 601 (proton acceptor) is an active-site residue. A disordered region spans residues 694–735; sequence EAEEWEEEQSCKIPSTASESQELSPESGLDPPAAHEQSLRSL. A compositionally biased stretch (polar residues) spans 705–717; the sequence is KIPSTASESQELS.

It belongs to the peptidase C19 family. USP28 subfamily.

It is found in the nucleus. The protein resides in the nucleoplasm. It carries out the reaction Thiol-dependent hydrolysis of ester, thioester, amide, peptide and isopeptide bonds formed by the C-terminal Gly of ubiquitin (a 76-residue protein attached to proteins as an intracellular targeting signal).. Deubiquitinase involved in DNA damage response checkpoint and MYC proto-oncogene stability. Involved in DNA damage induced apoptosis by specifically deubiquitinating proteins of the DNA damage pathway such as CLSPN. Also involved in G2 DNA damage checkpoint, by deubiquitinating CLSPN, and preventing its degradation by the anaphase promoting complex/cyclosome (APC/C). Specifically deubiquitinates MYC in the nucleoplasm, leading to prevent MYC degradation by the proteasome. Deubiquitinates ZNF304, hence may prevent ZNF304 degradation by the proteasome, leading to the activated KRAS-mediated promoter hypermethylation and transcriptional silencing of tumor suppressor genes (TSGs). This is Ubiquitin carboxyl-terminal hydrolase 28 (USP28) from Gallus gallus (Chicken).